A 1906-amino-acid polypeptide reads, in one-letter code: Retinoic acid-induced protein 1 (1906 aa).

Disordered stretches follow at residues 1–261 (MQSF…APGQ), 273–299 (RLSY…RHHA), 335–370 (YQTF…LENF), 469–520 (VSRT…YLSG), 538–571 (SPAR…SDDS), and 656–712 (SAWP…GTKP). Residues 13–24 (KQQNYQQTSQET) are compositionally biased toward polar residues. Over residues 66 to 75 (PSGTAAAVAA) the composition is skewed to low complexity. The segment covering 124–134 (PQPPPPQPQPL) has biased composition (pro residues). Positions 213-226 (SQSFPTSSTYSSSV) are enriched in low complexity. A compositionally biased stretch (polar residues) spans 252-261 (TASSSLAPGQ). Low complexity-rich tracts occupy residues 278–291 (QQQQ…QQQQ) and 339–353 (SPSS…VGRS). Phosphoserine occurs at positions 339 and 345. Phosphothreonine is present on Thr472. Residues 541 to 563 (RVNSNSKAKPESVSTCSVTSPDD) are compositionally biased toward polar residues. Phosphoserine is present on residues Ser568 and Ser683. Phosphothreonine is present on Thr696. The residue at position 805 (Ser805) is a Phosphoserine. Residue Lys811 forms a Glycyl lysine isopeptide (Lys-Gly) (interchain with G-Cter in SUMO2) linkage. Lys819 participates in a covalent cross-link: Glycyl lysine isopeptide (Lys-Gly) (interchain with G-Cter in SUMO1). Ser880 and Ser892 each carry phosphoserine. Lys901 participates in a covalent cross-link: Glycyl lysine isopeptide (Lys-Gly) (interchain with G-Cter in SUMO1); alternate. Residue Lys901 forms a Glycyl lysine isopeptide (Lys-Gly) (interchain with G-Cter in SUMO2); alternate linkage. Residues 937-947 (KVQSWFESSLS) are compositionally biased toward polar residues. 5 disordered regions span residues 937-1299 (KVQS…ETPD), 1344-1570 (FACK…PLDP), 1613-1637 (VVNS…SSSS), 1746-1775 (AAAA…SARG), and 1794-1819 (EEAA…GGEA). A compositionally biased stretch (basic and acidic residues) spans 950–962 (KPGEEGPDGERAP). Residues 996-1005 (KSLRSRRVHR) show a composition bias toward basic residues. A Phosphoserine modification is found at Ser1064. A Phosphothreonine modification is found at Thr1068. Residues 1101–1119 (PSPKAASSPSNPAALPVAS) show a composition bias toward low complexity. The residue at position 1122 (Ser1122) is a Phosphoserine. Short sequence motifs (nuclear localization signal) lie at residues 1160–1177 (RRRP…TKKL) and 1223–1240 (KRKS…RNLV). Residues 1242 to 1252 (RSRSSSSSNAS) are compositionally biased toward low complexity. Residues Ser1352, Ser1358, and Ser1374 each carry the phosphoserine modification. A Glycyl lysine isopeptide (Lys-Gly) (interchain with G-Cter in SUMO2) cross-link involves residue Lys1425. Position 1431 is a phosphoserine (Ser1431). A compositionally biased stretch (basic residues) spans 1444-1453 (PKKRSRKGRA). 2 stretches are compositionally biased toward polar residues: residues 1482–1491 (SGTQGASEDN) and 1517–1534 (QPQT…YSSY). A compositionally biased stretch (basic residues) spans 1535-1545 (SKRKRLTRGRA). A compositionally biased stretch (low complexity) spans 1628–1637 (SSSASSSSSS). Residues 1780–1835 (LQSCYCCDGREDGGEEAAPADKGRKHECSKEAPAEPGGEAQEHWVHEACAVWTGGV) form a C2HC pre-PHD-type zinc finger. Residues 1798–1812 (PADKGRKHECSKEAP) show a composition bias toward basic and acidic residues. The PHD-type zinc-finger motif lies at 1855–1903 (MMCSSCQEAGATIGCCHKGCLHTYHYPCASDAGCIFIEENFSLKCPKHK).

Expressed in all tissues examined with higher expression in the heart and brain. No expression was seen in the corpus callosum of the brain.

It localises to the cytoplasm. Its subcellular location is the nucleus. Transcriptional regulator of the circadian clock components: CLOCK, BMAL1, BMAL2, PER1/3, CRY1/2, NR1D1/2 and RORA/C. Positively regulates the transcriptional activity of CLOCK a core component of the circadian clock. Regulates transcription through chromatin remodeling by interacting with other proteins in chromatin as well as proteins in the basic transcriptional machinery. May be important for embryonic and postnatal development. May be involved in neuronal differentiation. This is Retinoic acid-induced protein 1 (RAI1) from Homo sapiens (Human).